The sequence spans 423 residues: MAAPRVFPLSCAVQQYAWGKMGYNSEVARLLASSDPLAQIAEDKPYAELWMGTHPRGDAKIFDNGISQKTLGQWIAENQDSLGSKVKDTFNGNLPFLFKVLSVETPLSIQAHPNKELAEKLHLQAPQHYPDANHKPEMAIALTPFQGLCGFRPVEEIVTFLKKVPEFQFLIGDEAATHLKQTMSHDSQAVASALQSCFSHLMKSEKKVVAEQLNLLVKRISQQVAAGNNMEDIFGELLLQLHQQYPGDIGCFAIYFLNLLNLKPGEAMFLEANVPHAYLKGDCVECMACSDNTVRAGLTPKFIDVPTLCEMLSYTPSSSKDRLFLPTRSQEDPYLSIYDPPVPDFAIMKMEVPGSVTEYKVLALDSASILLVVQGTVIASTPTTQTPIPLQRGGVLFIGANESVSLKLTEPKDLLIFRACCLL.

Alanine 2 is subject to N-acetylalanine. Phosphoserine is present on residues serine 102 and serine 108. Positions 110, 112, 137, and 276 each coordinate Zn(2+). Arginine 295 is a catalytic residue.

The protein belongs to the mannose-6-phosphate isomerase type 1 family. Zn(2+) is required as a cofactor.

The protein localises to the cytoplasm. The enzyme catalyses D-mannose 6-phosphate = D-fructose 6-phosphate. It participates in nucleotide-sugar biosynthesis; GDP-alpha-D-mannose biosynthesis; alpha-D-mannose 1-phosphate from D-fructose 6-phosphate: step 1/2. Functionally, isomerase that catalyzes the interconversion of fructose-6-P and mannose-6-P and has a critical role in the supply of D-mannose derivatives required for many eukaryotic glycosylation reactions. In Macaca fascicularis (Crab-eating macaque), this protein is Mannose-6-phosphate isomerase (MPI).